The following is a 396-amino-acid chain: Phosphoglycerate kinase (396 aa).

Substrate contacts are provided by residues 21–23, Arg36, 59–62, Arg113, and Arg146; these read DLN and HLGR. ATP is bound by residues Lys197, Glu319, and 345–348; that span reads GGDT.

The protein belongs to the phosphoglycerate kinase family. In terms of assembly, monomer.

The protein localises to the cytoplasm. The enzyme catalyses (2R)-3-phosphoglycerate + ATP = (2R)-3-phospho-glyceroyl phosphate + ADP. Its pathway is carbohydrate degradation; glycolysis; pyruvate from D-glyceraldehyde 3-phosphate: step 2/5. In Legionella pneumophila (strain Paris), this protein is Phosphoglycerate kinase.